A 498-amino-acid polypeptide reads, in one-letter code: Beta-1,3-glucosyltransferase (498 aa).

The Cytoplasmic portion of the chain corresponds to 1–6; it reads MRPPAC. Residues 7–27 form a helical; Signal-anchor for type II membrane protein membrane-spanning segment; it reads WWLLAPPALLALLTCSLAFGL. The Lumenal portion of the chain corresponds to 28–498; the sequence is ASEDTKKEVK…ETQKGFREEL (471 aa). N-linked (GlcNAc...) asparagine glycosylation is present at Asn-336. A Prevents secretion from ER motif is present at residues 495–498; the sequence is REEL.

Belongs to the glycosyltransferase 31 family. In terms of tissue distribution, widely expressed, with highest levels in testis and uterus.

Its subcellular location is the endoplasmic reticulum membrane. It functions in the pathway protein modification; protein glycosylation. In terms of biological role, O-glucosyltransferase that transfers glucose toward fucose with a beta-1,3 linkage. Specifically glucosylates O-linked fucosylglycan on TSP type-1 domains of proteins, thereby contributing to elongation of O-fucosylglycan. This chain is Beta-1,3-glucosyltransferase, found in Homo sapiens (Human).